Reading from the N-terminus, the 485-residue chain is Membrane-bound lytic murein transglycosylase F (485 aa).

The N-terminal stretch at 1-29 (MFAHTALRQRCAKWLFATGLFLLLGACVE) is a signal peptide. Residues 30–267 (KPSTLERVKE…RLKDRYYGHV (238 aa)) form a non-LT domain region. Residues 268-485 (DVLGYVGAYT…DKPAEQSPPM (218 aa)) form an LT domain region. E314 is a catalytic residue. The interval 465-485 (EGNLHVPGVNKDKPAEQSPPM) is disordered.

It in the N-terminal section; belongs to the bacterial solute-binding protein 3 family. The protein in the C-terminal section; belongs to the transglycosylase Slt family.

It is found in the cell outer membrane. It carries out the reaction Exolytic cleavage of the (1-&gt;4)-beta-glycosidic linkage between N-acetylmuramic acid (MurNAc) and N-acetylglucosamine (GlcNAc) residues in peptidoglycan, from either the reducing or the non-reducing ends of the peptidoglycan chains, with concomitant formation of a 1,6-anhydrobond in the MurNAc residue.. Murein-degrading enzyme that degrades murein glycan strands and insoluble, high-molecular weight murein sacculi, with the concomitant formation of a 1,6-anhydromuramoyl product. Lytic transglycosylases (LTs) play an integral role in the metabolism of the peptidoglycan (PG) sacculus. Their lytic action creates space within the PG sacculus to allow for its expansion as well as for the insertion of various structures such as secretion systems and flagella. The protein is Membrane-bound lytic murein transglycosylase F of Pseudomonas putida (strain W619).